The sequence spans 411 residues: Dual specificity protein phosphatase Mpk3 (411 aa).

Residues 22-149 form the Rhodanese domain; the sequence is DSKDLILLDC…FRQAFPEWCE (128 aa). Residues 184 to 197 show a composition bias toward low complexity; it reads DSACSSSAESSDCE. The disordered stretch occupies residues 184-209; it reads DSACSSSAESSDCESSSHHHHHHSHH. Residues 214 to 358 enclose the Tyrosine-protein phosphatase domain; sequence APVEIIPGLL…LLSFESQLRL (145 aa). C302 (phosphocysteine intermediate) is an active-site residue.

It belongs to the protein-tyrosine phosphatase family. Non-receptor class dual specificity subfamily. Interacts (via N-terminal region) with phosphorylated rl. In terms of tissue distribution, ubiquitous expression in eye and wing imaginal disks. Enriched in ovary.

It is found in the cytoplasm. The catalysed reaction is O-phospho-L-tyrosyl-[protein] + H2O = L-tyrosyl-[protein] + phosphate. It catalyses the reaction O-phospho-L-seryl-[protein] + H2O = L-seryl-[protein] + phosphate. It carries out the reaction O-phospho-L-threonyl-[protein] + H2O = L-threonyl-[protein] + phosphate. With respect to regulation, activity abolished by tyrosine phosphatase inhibitor sodium vanadate. Activated by rl. Its function is as follows. Negatively regulates the activity of members of the MAP kinase family in response to changes in the cellular environment. Has a specificity for the ERK family. Acts as a negative regulator in a variety of developmental processes including cell differentiation and proliferation controlled by the Ras/ERK pathway. Suppresses the photoreceptor cell differentiation and wing vein formation. Required for proper oogenesis and early embryogenesis. Functions autonomously in a subset of photoreceptor progenitor cells in eye imaginal disks. Also appears to be required in surrounding non-neuronal cells for ommatidial patterning and photoreceptor differentiation. Plays a role in the maintenance of epithelial integrity during tracheal development. The protein is Dual specificity protein phosphatase Mpk3 (Mkp3) of Drosophila melanogaster (Fruit fly).